Consider the following 319-residue polypeptide: Acetyl esterase (319 aa).

An Involved in the stabilization of the negatively charged intermediate by the formation of the oxyanion hole motif is present at residues 91–93; sequence HGG. Active-site residues include serine 165, aspartate 262, and histidine 292.

It belongs to the 'GDXG' lipolytic enzyme family. In terms of assembly, homodimer. Interacts with MalT and MelA.

It is found in the cytoplasm. Functionally, displays esterase activity towards short chain fatty esters (acyl chain length of up to 8 carbons). Able to hydrolyze triacetylglycerol (triacetin) and tributyrylglycerol (tributyrin), but not trioleylglycerol (triolein) or cholesterol oleate. Negatively regulates MalT activity by antagonizing maltotriose binding. Inhibits MelA galactosidase activity. This Escherichia coli O17:K52:H18 (strain UMN026 / ExPEC) protein is Acetyl esterase.